Consider the following 74-residue polypeptide: Large ribosomal subunit protein uL29 (74 aa).

It belongs to the universal ribosomal protein uL29 family.

This Streptomyces coelicolor (strain ATCC BAA-471 / A3(2) / M145) protein is Large ribosomal subunit protein uL29 (rpmC).